The sequence spans 653 residues: 4-alpha-glucanotransferase (653 aa).

The Nucleophile role is filled by E123. Residue D214 is the Proton donor of the active site.

It belongs to the glycosyl hydrolase 57 family.

It carries out the reaction Transfers a segment of a (1-&gt;4)-alpha-D-glucan to a new position in an acceptor, which may be glucose or a (1-&gt;4)-alpha-D-glucan.. The polypeptide is 4-alpha-glucanotransferase (Thermococcus kodakarensis (strain ATCC BAA-918 / JCM 12380 / KOD1) (Pyrococcus kodakaraensis (strain KOD1))).